We begin with the raw amino-acid sequence, 316 residues long: Transcription initiation factor IIB (316 aa).

The segment at 11 to 42 adopts a TFIIB-type zinc-finger fold; sequence PKVTCPNHPDALLVEDYRAGDMICSECGLVVG. Zn(2+)-binding residues include Cys15, His18, Cys34, and Cys37. Tandem repeats lie at residues 124–200 and 218–294.

The protein belongs to the TFIIB family.

It is found in the nucleus. The protein localises to the chromosome. The catalysed reaction is L-lysyl-[protein] + acetyl-CoA = N(6)-acetyl-L-lysyl-[protein] + CoA + H(+). Functionally, general transcription factor that plays a role in transcription initiation by RNA polymerase II (Pol II). Involved in the pre-initiation complex (PIC) formation and Pol II recruitment at promoter DNA. Together with the TATA box-bound TBP forms the core initiation complex and provides a bridge between TBP and the Pol II-TFIIF complex. Released from the PIC early following the onset of transcription during the initiation and elongation transition and reassociates with TBP during the next transcription cycle. Associates with chromatin to core promoter-specific regions. Binds to two distinct DNA core promoter consensus sequence elements in a TBP-independent manner; these IIB-recognition elements (BREs) are localized immediately upstream (BREu), 5'-[GC][GC][GA]CGCC-3', and downstream (BREd), 5'-[GA]T[TGA][TG][GT][TG][TG]-3', of the TATA box element. Modulates transcription start site selection. Also exhibits autoacetyltransferase activity that contributes to the activated transcription. This chain is Transcription initiation factor IIB, found in Xenopus laevis (African clawed frog).